A 366-amino-acid polypeptide reads, in one-letter code: NADP-dependent isopropanol dehydrogenase (366 aa).

Zn(2+) contacts are provided by Cys-43, His-65, Glu-66, and Asp-156. NADP(+) is bound by residues 181 to 184 (IGPV), 204 to 206 (GSR), Tyr-224, 271 to 273 (VNY), and Lys-346.

The protein belongs to the zinc-containing alcohol dehydrogenase family. Homodimer. Requires Zn(2+) as cofactor.

The protein localises to the cytoplasm. It catalyses the reaction propan-2-ol + NADP(+) = acetone + NADPH + H(+). Functionally, alcohol dehydrogenase with a preference for medium chain secondary alcohols, such as 2-butanol and isopropanol. Has very low activity with primary alcohols, such as ethanol. Under physiological conditions, the enzyme reduces aldehydes and 2-ketones to produce secondary alcohols. Is also active with acetaldehyde and propionaldehyde. In Entamoeba histolytica (strain ATCC 30459 / HM-1:IMSS / ABRM), this protein is NADP-dependent isopropanol dehydrogenase.